A 136-amino-acid chain; its full sequence is Small ribosomal subunit protein uS9 (136 aa).

The disordered stretch occupies residues 95–136 (GLSPDNRKPLKTEGHLSRDPRSKERKKYGLKKARKAGQFSKR). Positions 99 to 116 (DNRKPLKTEGHLSRDPRS) are enriched in basic and acidic residues. The span at 117-136 (KERKKYGLKKARKAGQFSKR) shows a compositional bias: basic residues.

The protein belongs to the universal ribosomal protein uS9 family.

The protein is Small ribosomal subunit protein uS9 of Prochlorococcus marinus subsp. pastoris (strain CCMP1986 / NIES-2087 / MED4).